The following is a 119-amino-acid chain: Ribonuclease P protein component (119 aa).

This sequence belongs to the RnpA family. As to quaternary structure, consists of a catalytic RNA component (M1 or rnpB) and a protein subunit.

The catalysed reaction is Endonucleolytic cleavage of RNA, removing 5'-extranucleotides from tRNA precursor.. Functionally, RNaseP catalyzes the removal of the 5'-leader sequence from pre-tRNA to produce the mature 5'-terminus. It can also cleave other RNA substrates such as 4.5S RNA. The protein component plays an auxiliary but essential role in vivo by binding to the 5'-leader sequence and broadening the substrate specificity of the ribozyme. This is Ribonuclease P protein component from Aromatoleum aromaticum (strain DSM 19018 / LMG 30748 / EbN1) (Azoarcus sp. (strain EbN1)).